A 183-amino-acid chain; its full sequence is Glutathione-regulated potassium-efflux system ancillary protein KefG (183 aa).

The protein belongs to the NAD(P)H dehydrogenase (quinone) family. KefG subfamily. As to quaternary structure, interacts with KefB.

The protein localises to the cell inner membrane. The catalysed reaction is a quinone + NADH + H(+) = a quinol + NAD(+). The enzyme catalyses a quinone + NADPH + H(+) = a quinol + NADP(+). In terms of biological role, regulatory subunit of a potassium efflux system that confers protection against electrophiles. Required for full activity of KefB. In Shigella flexneri serotype 5b (strain 8401), this protein is Glutathione-regulated potassium-efflux system ancillary protein KefG.